Here is a 380-residue protein sequence, read N- to C-terminus: Protein trichome birefringence-like 38 (380 aa).

Residues 7 to 29 (SLLLLFLPLLTVTILSGVEQAFA) form a helical; Signal-anchor for type II membrane protein membrane-spanning segment. The GDS motif signature appears at 134-136 (GDS). Residues 357-371 (DCSHWCLPGLPDTWN) carry the DCXHWCLPGXXDXWN motif motif.

Belongs to the PC-esterase family. TBL subfamily.

The protein resides in the membrane. May act as a bridging protein that binds pectin and other cell wall polysaccharides. Probably involved in maintaining esterification of pectins. May be involved in the specific O-acetylation of cell wall polymers. This chain is Protein trichome birefringence-like 38 (TBL38), found in Arabidopsis thaliana (Mouse-ear cress).